A 302-amino-acid polypeptide reads, in one-letter code: MPGLWRQRLPSAWALLLLPFLPLLMPAAPAAHRGSYKPVIVVHGLFDSSYSFRHLLDYINETHTGTVVTVLDLFDGRESLRPLWEQVQGFREAVVPIMEKAPEGVHLICYSQGGLVCRALLSVMDNHNVDSFISLSSPQMGQYGDTDYLKWLFPTSMRSNLYRVCYSPWGQEFSICNYWHDPHHDDLYLNASSFLALINGERDHPNATAWRKNFLRVGRLVLIGGPDDGVITPWQSSFFGFYDANETVLEMEEQPVYLRDSFGLKTLLARGAIVRCPMAGISHTTWHSNRTLYDTCIEPWLS.

Residues 1–27 (MPGLWRQRLPSAWALLLLPFLPLLMPA) form the signal peptide. Asn-60 is a glycosylation site (N-linked (GlcNAc...) asparagine). 2 disulfides stabilise this stretch: Cys-109/Cys-117 and Cys-165/Cys-176. Catalysis depends on Ser-111, which acts as the Nucleophile. 2 N-linked (GlcNAc...) asparagine glycosylation sites follow: Asn-190 and Asn-206. Residue Asp-228 is part of the active site. Asn-245 is a glycosylation site (N-linked (GlcNAc...) asparagine). Cysteines 276 and 296 form a disulfide. His-283 is a catalytic residue. N-linked (GlcNAc...) asparagine glycosylation is present at Asn-289.

It belongs to the palmitoyl-protein thioesterase family. In terms of tissue distribution, expressed throughout the brain, primarily in neurons, and at lower levels in glial cells.

Its subcellular location is the lysosome. The enzyme catalyses hexadecanoyl-CoA + H2O = hexadecanoate + CoA + H(+). The catalysed reaction is S-hexadecanoyl-N-acetylcysteamine + H2O = N-acetylcysteamine + hexadecanoate + H(+). In terms of biological role, catalyzes the cleavage of thioester bonds from S-palmitoyl-CoA or S-palmitoyl-N-acetylcysteamine (unbranched structures) but does not have activity against palmitoylcysteine or palmitoylated proteins, branched structures or bulky head groups. Conversely, hydrolyzes both long and short chain fatty acyl-CoA substrate. This chain is Lysosomal thioesterase PPT2 (Ppt2), found in Mus musculus (Mouse).